The following is a 273-amino-acid chain: Ribosomal RNA small subunit methyltransferase A (273 aa).

Residues N18, L20, G45, E66, D91, and N113 each contribute to the S-adenosyl-L-methionine site.

Belongs to the class I-like SAM-binding methyltransferase superfamily. rRNA adenine N(6)-methyltransferase family. RsmA subfamily.

It localises to the cytoplasm. It catalyses the reaction adenosine(1518)/adenosine(1519) in 16S rRNA + 4 S-adenosyl-L-methionine = N(6)-dimethyladenosine(1518)/N(6)-dimethyladenosine(1519) in 16S rRNA + 4 S-adenosyl-L-homocysteine + 4 H(+). In terms of biological role, specifically dimethylates two adjacent adenosines (A1518 and A1519) in the loop of a conserved hairpin near the 3'-end of 16S rRNA in the 30S particle. May play a critical role in biogenesis of 30S subunits. This chain is Ribosomal RNA small subunit methyltransferase A, found in Salmonella newport (strain SL254).